We begin with the raw amino-acid sequence, 338 residues long: DNA-directed RNA polymerase subunit alpha (338 aa).

The interval 1 to 225 (MLISQRPTLT…ELFGLARELN (225 aa)) is alpha N-terminal domain (alpha-NTD). The segment at 242-338 (YIAAYGMPIE…YIDTDPEETE (97 aa)) is alpha C-terminal domain (alpha-CTD). Residues 314–338 (FDPTQLDGYDAATGDYIDTDPEETE) are disordered.

It belongs to the RNA polymerase alpha chain family. Homodimer. The RNAP catalytic core consists of 2 alpha, 1 beta, 1 beta' and 1 omega subunit. When a sigma factor is associated with the core the holoenzyme is formed, which can initiate transcription.

It carries out the reaction RNA(n) + a ribonucleoside 5'-triphosphate = RNA(n+1) + diphosphate. Its function is as follows. DNA-dependent RNA polymerase catalyzes the transcription of DNA into RNA using the four ribonucleoside triphosphates as substrates. The chain is DNA-directed RNA polymerase subunit alpha from Corynebacterium diphtheriae (strain ATCC 700971 / NCTC 13129 / Biotype gravis).